The following is a 509-amino-acid chain: Putative aldehyde dehydrogenase family 7 member A1 homolog (509 aa).

244–249 (GSTEVG) contacts NAD(+). E266 functions as the Proton acceptor in the catalytic mechanism. C300 serves as the catalytic Nucleophile.

It belongs to the aldehyde dehydrogenase family. In terms of assembly, homotetramer.

It catalyses the reaction an aldehyde + NAD(+) + H2O = a carboxylate + NADH + 2 H(+). The polypeptide is Putative aldehyde dehydrogenase family 7 member A1 homolog (Dictyostelium discoideum (Social amoeba)).